The sequence spans 96 residues: Progonadoliberin-1 (96 aa).

Residues 1–26 (MHRKMAVKTLSVWLLLVGTLVPQHCC) form the signal peptide. At glutamine 27 the chain carries Pyrrolidone carboxylic acid. A Glycine amide modification is found at glycine 36.

The protein belongs to the GnRH family. In terms of tissue distribution, preoptic area of the brain.

The protein localises to the secreted. Its function is as follows. Stimulates the secretion of gonadotropins. In Verasper moseri (Barfin flounder), this protein is Progonadoliberin-1 (gnrh1).